The following is a 445-amino-acid chain: Methylenetetrahydrofolate--tRNA-(uracil-5-)-methyltransferase TrmFO (445 aa).

Residue 9 to 14 (GGGLAG) participates in FAD binding.

Belongs to the MnmG family. TrmFO subfamily. Requires FAD as cofactor.

The protein localises to the cytoplasm. It catalyses the reaction uridine(54) in tRNA + (6R)-5,10-methylene-5,6,7,8-tetrahydrofolate + NADH + H(+) = 5-methyluridine(54) in tRNA + (6S)-5,6,7,8-tetrahydrofolate + NAD(+). The enzyme catalyses uridine(54) in tRNA + (6R)-5,10-methylene-5,6,7,8-tetrahydrofolate + NADPH + H(+) = 5-methyluridine(54) in tRNA + (6S)-5,6,7,8-tetrahydrofolate + NADP(+). Catalyzes the folate-dependent formation of 5-methyl-uridine at position 54 (M-5-U54) in all tRNAs. This is Methylenetetrahydrofolate--tRNA-(uracil-5-)-methyltransferase TrmFO from Rhizorhabdus wittichii (strain DSM 6014 / CCUG 31198 / JCM 15750 / NBRC 105917 / EY 4224 / RW1) (Sphingomonas wittichii).